The chain runs to 410 residues: Neuroserpin (410 aa).

The first 16 residues, 1 to 16, serve as a signal peptide directing secretion; sequence MTYLELLALLALQSVV. Asn-157, Asn-321, and Asn-401 each carry an N-linked (GlcNAc...) asparagine glycan. Ser-403 carries an O-linked (Xyl...) (chondroitin sulfate) serine glycan.

It belongs to the serpin family. Detected in neurons in embryonic brain cortex (at protein level). During embryonic development mostly expressed in CNS. In adult expressed in brain and much less in spinal cord, heart, kidney and testis.

It localises to the secreted. It is found in the cytoplasmic vesicle. Its subcellular location is the secretory vesicle lumen. The protein localises to the perikaryon. Functionally, serine protease inhibitor that inhibits plasminogen activators and plasmin but not thrombin. May be involved in the formation or reorganization of synaptic connections as well as for synaptic plasticity in the adult nervous system. May protect neurons from cell damage by tissue-type plasminogen activator. This Mus musculus (Mouse) protein is Neuroserpin (Serpini1).